We begin with the raw amino-acid sequence, 373 residues long: UDP-N-acetylglucosamine--N-acetylmuramyl-(pentapeptide) pyrophosphoryl-undecaprenol N-acetylglucosamine transferase (373 aa).

UDP-N-acetyl-alpha-D-glucosamine contacts are provided by residues 10 to 12 (TGG), Asn124, Arg166, Ser196, and Gln301.

Belongs to the glycosyltransferase 28 family. MurG subfamily.

It localises to the cell membrane. It catalyses the reaction di-trans,octa-cis-undecaprenyl diphospho-N-acetyl-alpha-D-muramoyl-L-alanyl-D-glutamyl-meso-2,6-diaminopimeloyl-D-alanyl-D-alanine + UDP-N-acetyl-alpha-D-glucosamine = di-trans,octa-cis-undecaprenyl diphospho-[N-acetyl-alpha-D-glucosaminyl-(1-&gt;4)]-N-acetyl-alpha-D-muramoyl-L-alanyl-D-glutamyl-meso-2,6-diaminopimeloyl-D-alanyl-D-alanine + UDP + H(+). It functions in the pathway cell wall biogenesis; peptidoglycan biosynthesis. Cell wall formation. Catalyzes the transfer of a GlcNAc subunit on undecaprenyl-pyrophosphoryl-MurNAc-pentapeptide (lipid intermediate I) to form undecaprenyl-pyrophosphoryl-MurNAc-(pentapeptide)GlcNAc (lipid intermediate II). The chain is UDP-N-acetylglucosamine--N-acetylmuramyl-(pentapeptide) pyrophosphoryl-undecaprenol N-acetylglucosamine transferase from Desulforudis audaxviator (strain MP104C).